The primary structure comprises 179 residues: Dual-action ribosomal maturation protein DarP (179 aa).

The protein belongs to the DarP family.

It is found in the cytoplasm. Its function is as follows. Member of a network of 50S ribosomal subunit biogenesis factors which assembles along the 30S-50S interface, preventing incorrect 23S rRNA structures from forming. Promotes peptidyl transferase center (PTC) maturation. This Erwinia tasmaniensis (strain DSM 17950 / CFBP 7177 / CIP 109463 / NCPPB 4357 / Et1/99) protein is Dual-action ribosomal maturation protein DarP.